The following is a 232-amino-acid chain: YlmG homolog protein 1-1, chloroplastic (232 aa).

The N-terminal 16 residues, 1-16 (MAAITALTLRSPVYLP), are a transit peptide targeting the chloroplast. A run of 2 helical transmembrane segments spans residues 147–167 (LTVVAVGIKKWLDIYSGVLMV) and 201–221 (IIPPIFDTLDVSPLLAFAVLG).

The protein belongs to the YggT family.

It is found in the plastid. The protein resides in the chloroplast thylakoid membrane. Functionally, required for the proper distribution of nucleoids in chloroplasts. The nucleoid partitioning by YLMG1-1 may be related to chloroplast division processes. The sequence is that of YlmG homolog protein 1-1, chloroplastic from Arabidopsis thaliana (Mouse-ear cress).